An 88-amino-acid chain; its full sequence is Small ribosomal subunit protein uS15c (88 aa).

It belongs to the universal ribosomal protein uS15 family. Part of the 30S ribosomal subunit.

The protein resides in the plastid. The protein localises to the chloroplast. In Capsella bursa-pastoris (Shepherd's purse), this protein is Small ribosomal subunit protein uS15c (rps15).